A 174-amino-acid polypeptide reads, in one-letter code: Alkyl hydroperoxide reductase AhpD (174 aa).

Cysteine 130 (proton donor) is an active-site residue. Cysteine 130 and cysteine 133 are disulfide-bonded. Cysteine 133 serves as the catalytic Cysteine sulfenic acid (-SOH) intermediate.

This sequence belongs to the AhpD family. In terms of assembly, homotrimer.

It carries out the reaction N(6)-[(R)-dihydrolipoyl]-L-lysyl-[lipoyl-carrier protein] + a hydroperoxide = N(6)-[(R)-lipoyl]-L-lysyl-[lipoyl-carrier protein] + an alcohol + H2O. Its function is as follows. Antioxidant protein with alkyl hydroperoxidase activity. Required for the reduction of the AhpC active site cysteine residues and for the regeneration of the AhpC enzyme activity. The protein is Alkyl hydroperoxide reductase AhpD of Corynebacterium kroppenstedtii (strain DSM 44385 / JCM 11950 / CIP 105744 / CCUG 35717).